Consider the following 904-residue polypeptide: Endoplasmic reticulum metallopeptidase 1 (904 aa).

N-acetylmethionine is present on methionine 1. Over 1–63 the chain is Cytoplasmic; it reads MEWGSESAAV…PGGSGGASRG (63 aa). Residues 1–65 are disordered; sequence MEWGSESAAV…GSGGASRGAG (65 aa). Positions 55 to 65 are enriched in gly residues; that stretch reads GGSGGASRGAG. A helical membrane pass occupies residues 64–84; the sequence is AGTGLSEVRAALGLALYLIAL. The Lumenal segment spans residues 85–399; sequence RTLVQLSLQQ…AASKYRHGNM (315 aa). An N-linked (GlcNAc...) asparagine glycan is attached at asparagine 182. Cysteine 204 and cysteine 222 are oxidised to a cystine. Residues histidine 205 and aspartate 217 each contribute to the Zn(2+) site. Glutamate 251 (proton acceptor) is an active-site residue. Zn(2+) contacts are provided by glutamate 252, glutamate 278, and histidine 354. A helical membrane pass occupies residues 400-420; it reads VFFDVLGLFVIAYPSRIGSII. Over 421 to 457 the chain is Cytoplasmic; that stretch reads NYMVVMGVVLYLGKKFLQPKHKTGNYKKDFLCGLGIT. A helical transmembrane segment spans residues 458-478; it reads LISWFTSLVTVLIIAVFISLI. Topologically, residues 479–489 are lumenal; that stretch reads GQSLSWYNHFY. A helical transmembrane segment spans residues 490–510; that stretch reads VSVCLYGTATVAKIILIHTLA. Residues 511-519 lie on the Cytoplasmic side of the membrane; sequence KRFYYMNAS. The helical transmembrane segment at 520 to 540 threads the bilayer; that stretch reads AQYLGEVFFDISLFVHCCFLV. Threonine 541 is a topological domain (lumenal). A helical transmembrane segment spans residues 542–562; the sequence is LTYQGLCSAFISAVWVAFPLL. At 563–579 the chain is on the cytoplasmic side; sequence TKLCVHKDFKQHGAQGK. A helical transmembrane segment spans residues 580-600; it reads FIAFYLLGMFIPYLYALYLIW. The Lumenal segment spans residues 601-621; sequence AVFEMFTPILGRSGSEIPPDV. A helical membrane pass occupies residues 622–642; it reads VLASILAGCTMILSSYFINFI. At 643-651 the chain is on the cytoplasmic side; the sequence is YLAKSTKKT. The chain crosses the membrane as a helical span at residues 652 to 672; that stretch reads MLTLTLVCAITFLLVCSGTFF. At 673–904 the chain is on the lumenal side; the sequence is PYSSNPANPK…WVCTYDLFVF (232 aa). Asparagine 730 carries N-linked (GlcNAc...) asparagine glycosylation.

Belongs to the peptidase M28 family. Requires Zn(2+) as cofactor.

It is found in the endoplasmic reticulum membrane. Within the ovary, required for the organization of somatic cells and oocytes into discrete follicular structures. The chain is Endoplasmic reticulum metallopeptidase 1 from Homo sapiens (Human).